We begin with the raw amino-acid sequence, 408 residues long: Aminoacylase-1A (408 aa).

Residue His80 participates in Zn(2+) binding. Residue Asp82 is part of the active site. A Zn(2+)-binding site is contributed by Asp113. Glu147 (proton acceptor) is an active-site residue. Zn(2+) is bound by residues Glu148, Glu175, and His373. At Ser408 the chain carries Phosphoserine.

This sequence belongs to the peptidase M20A family. As to quaternary structure, homodimer. Requires Zn(2+) as cofactor. Post-translationally, the N-terminus is blocked.

The protein localises to the cytoplasm. It carries out the reaction an N-acyl-L-amino acid + H2O = an L-alpha-amino acid + a carboxylate. The catalysed reaction is an N-acetyl-L-cysteine-S-conjugate + H2O = an S-substituted L-cysteine + acetate. Its function is as follows. Involved in the hydrolysis of N-acylated or N-acetylated amino acids (except L-aspartate). This chain is Aminoacylase-1A (Acy1a), found in Rattus norvegicus (Rat).